A 265-amino-acid chain; its full sequence is MKKTFLVIGNPIKHSLSPKLHNYWIKKYKINATYEKNLLDHSEIEDLIFNIRKEKIHGLNITVPFKKMIIPFLDELSEEAEISQSVNTIYKRDNKIIGDNTDIEGFKLSLEKTEQNVKNKKALILGAGGVVSSIIIALKKIQIEKIYLSNRTELKAIELKKHFPEIEIIKWGETIDFDMIINATSIGLKEEDEININYQKISKDKFFYDVIYNPPETNFLKNAKKYGGITKNGKMMFIYQAQKAFFIWHKIVPEVDSETINLLDV.

Shikimate is bound by residues 15-17 (SLS) and Thr62. Lys66 acts as the Proton acceptor in catalysis. Residue Glu78 coordinates NADP(+). Shikimate is bound by residues Asn87 and Asp102. NADP(+) is bound by residues 126–130 (GAGGV), 150–155 (NRTELK), and Val210. Tyr212 contributes to the shikimate binding site. Position 233 (Gly233) interacts with NADP(+).

The protein belongs to the shikimate dehydrogenase family. In terms of assembly, homodimer.

It carries out the reaction shikimate + NADP(+) = 3-dehydroshikimate + NADPH + H(+). It participates in metabolic intermediate biosynthesis; chorismate biosynthesis; chorismate from D-erythrose 4-phosphate and phosphoenolpyruvate: step 4/7. Functionally, involved in the biosynthesis of the chorismate, which leads to the biosynthesis of aromatic amino acids. Catalyzes the reversible NADPH linked reduction of 3-dehydroshikimate (DHSA) to yield shikimate (SA). The sequence is that of Shikimate dehydrogenase (NADP(+)) from Pelagibacter ubique (strain HTCC1062).